We begin with the raw amino-acid sequence, 51 residues long: Large ribosomal subunit protein bL33 (51 aa).

The protein belongs to the bacterial ribosomal protein bL33 family.

This chain is Large ribosomal subunit protein bL33, found in Hahella chejuensis (strain KCTC 2396).